Consider the following 178-residue polypeptide: CASP-like protein 2U3 (178 aa).

Residues 1–4 (MACR) are Cytoplasmic-facing. The helical transmembrane segment at 5–25 (VMEVLLRVLAILLSIAGALVM) threads the bilayer. Residues 26 to 52 (AKDKQDTFVMLGTVPVPLYARHSYVEA) lie on the Extracellular side of the membrane. A helical membrane pass occupies residues 53–73 (FVFLVYANGIVAIYCFIAVLL). Over 74 to 80 (SLLAKSR) the chain is Cytoplasmic. Residues 81–101 (VLAGLLFFMDQALAYLLLAAA) form a helical membrane-spanning segment. Residues 102–132 (AASTEVAYIAKRGEKKLVWGEVCSNFEHFCN) are Extracellular-facing. The chain crosses the membrane as a helical span at residues 133–153 (LVGVSLVLTFLSVLVLVTLAI). The Cytoplasmic segment spans residues 154–178 (LSGKRLFGHPPLCAPPSTPPVHQGV).

The protein belongs to the Casparian strip membrane proteins (CASP) family. Homodimer and heterodimers.

The protein localises to the cell membrane. This is CASP-like protein 2U3 from Pteridium aquilinum subsp. aquilinum (Bracken fern).